Here is a 236-residue protein sequence, read N- to C-terminus: Small ribosomal subunit protein uS2c (236 aa).

Belongs to the universal ribosomal protein uS2 family.

It is found in the plastid. The protein localises to the chloroplast. The sequence is that of Small ribosomal subunit protein uS2c (rps2) from Vitis vinifera (Grape).